Here is a 149-residue protein sequence, read N- to C-terminus: Nucleoside diphosphate kinase (149 aa).

Positions 9, 57, 85, 91, 102, and 112 each coordinate ATP. H115 acts as the Pros-phosphohistidine intermediate in catalysis.

It belongs to the NDK family. In terms of assembly, homotetramer. Mg(2+) is required as a cofactor.

The protein resides in the cytoplasm. It carries out the reaction a 2'-deoxyribonucleoside 5'-diphosphate + ATP = a 2'-deoxyribonucleoside 5'-triphosphate + ADP. The catalysed reaction is a ribonucleoside 5'-diphosphate + ATP = a ribonucleoside 5'-triphosphate + ADP. Functionally, major role in the synthesis of nucleoside triphosphates other than ATP. The ATP gamma phosphate is transferred to the NDP beta phosphate via a ping-pong mechanism, using a phosphorylated active-site intermediate. The protein is Nucleoside diphosphate kinase of Pelotomaculum thermopropionicum (strain DSM 13744 / JCM 10971 / SI).